The following is a 265-amino-acid chain: Synaptoporin (265 aa).

At 1–4 (MCMV) the chain is on the cytoplasmic side. In terms of domain architecture, MARVEL spans 1–202 (MCMVIFAPLF…NIWFVFKETG (202 aa)). The chain crosses the membrane as a helical span at residues 5–25 (IFAPLFAIFAFATCGGYSGGL). At 26-81 (RLSVDCVNKTESNLSIDIAFAYPFRLHQVTFEVPTCEGKERQKLALIGDSSSSAEF) the chain is on the vesicular side. N-linked (GlcNAc...) asparagine glycosylation is found at Asn-33 and Asn-38. Residues 82–102 (FVTVAVFAFLYSLAATVVYIF) traverse the membrane as a helical segment. The Cytoplasmic segment spans residues 103–114 (FQNKYRENNRGP). The helical transmembrane segment at 115 to 135 (LIDFIVTVVFSFLWLVGSSAW) threads the bilayer. Topologically, residues 136–177 (AKGLSDVKVATDPKEVLLLMSACKQPSNKCMAIHSPVMSSLN) are vesicular. Residues 178-198 (TSVVFGFLNFILWAGNIWFVF) form a helical membrane-spanning segment. Residues 199–265 (KETGWHSSGQ…TGPTSFTNQI (67 aa)) lie on the Cytoplasmic side of the membrane. Tandem repeats lie at residues 210-214 (YLSDP), 222-226 (YNQGG), 227-231 (YNQDS), 232-236 (YGSSS), and 238-242 (YSQQA). The segment at 210-242 (YLSDPMEKHSSSYNQGGYNQDSYGSSSGYSQQA) is 5 X approximate repeats. Ser-212 is modified (phosphoserine). The tract at residues 221–265 (SYNQGGYNQDSYGSSSGYSQQASLGPTSDEFGQQPTGPTSFTNQI) is disordered. The segment covering 224-243 (QGGYNQDSYGSSSGYSQQAS) has biased composition (low complexity). The segment covering 244 to 265 (LGPTSDEFGQQPTGPTSFTNQI) has biased composition (polar residues).

It belongs to the synaptophysin/synaptobrevin family.

The protein localises to the cytoplasmic vesicle. It localises to the secretory vesicle. Its subcellular location is the synaptic vesicle membrane. The protein resides in the synapse. It is found in the synaptosome. Intrinsic membrane protein of small synaptic vesicles. Probable vesicular channel protein. This chain is Synaptoporin (SYNPR), found in Homo sapiens (Human).